A 20-amino-acid chain; its full sequence is Pregnancy-associated glycoprotein 73B (20 aa).

It belongs to the peptidase A1 family. Post-translationally, N-glycosylated. As to expression, expressed in chorionic epithelium (trophectoderm).

It is found in the secreted. Its subcellular location is the extracellular space. This Bubalus bubalis (Domestic water buffalo) protein is Pregnancy-associated glycoprotein 73B.